Reading from the N-terminus, the 133-residue chain is Small ribosomal subunit protein uS8 (133 aa).

The tract at residues 1 to 32 (MANHDPISDMLTRIRNASEKRHESTKVPASRM) is disordered. Residues 16–25 (NASEKRHEST) are compositionally biased toward basic and acidic residues.

This sequence belongs to the universal ribosomal protein uS8 family. As to quaternary structure, part of the 30S ribosomal subunit. Contacts proteins S5 and S12.

In terms of biological role, one of the primary rRNA binding proteins, it binds directly to 16S rRNA central domain where it helps coordinate assembly of the platform of the 30S subunit. The protein is Small ribosomal subunit protein uS8 of Synechococcus sp. (strain CC9311).